Consider the following 413-residue polypeptide: Interferon-inducible GTPase 1 (413 aa).

Glycine 2 carries N-myristoyl glycine lipidation. Residues 68–250 (SVLNVAVTGE…PVLMDKLISD (183 aa)) form the IRG-type G domain. GDP-binding residues include glycine 79, glycine 81, lysine 82, serine 83, serine 84, threonine 102, and glycine 103. Threonine 102 carries the post-translational modification (Microbial infection) Phosphothreonine; by ROP18. Position 108 is a (Microbial infection) Phosphothreonine; by ROP18 (threonine 108). Positions 184, 186, 187, and 232 each coordinate GDP. Cysteines 236 and 410 form a disulfide.

The protein belongs to the TRAFAC class dynamin-like GTPase superfamily. IRG family. Monomer, as apoenzyme and in the GDP-bound form. Homooligomer, upon GTP binding. Interacts with HOOK3. As to quaternary structure, (Microbial infection) Interacts with Toxoplasma gondii GRA7 in GTP-dependent manner; the interaction results in faster turnover of the GTP-activated IIGP1 oligomer. Interacts with T.gondii ROP5; the interaction results in inhibition of IRGA6/IIGP1 GTPase activity and oligomerization. In terms of processing, myristoylated. (Microbial infection) Phosphorylated by Toxoplasma gondii ROP18 from virulent strains.

The protein resides in the cytoplasm. Its subcellular location is the nucleus membrane. It localises to the endoplasmic reticulum membrane. The protein localises to the golgi apparatus. It is found in the golgi stack membrane. The protein resides in the parasitophorous vacuole membrane. It carries out the reaction GTP + H2O = GDP + phosphate + H(+). Its function is as follows. GTPase with low activity. Has higher affinity for GDP than for GTP. Plays a role in resistance to intracellular pathogens. During infection with avirulent Toxoplasma gondii strains, recruited to the parasitophorous vacuole membrane. Required for disruption of the parasitophorous vacuole formed following T.gondii infection and subsequent killing of the parasite. Mediates resistance to Chlamydia trachomatis infection by targeting bacterial inclusions to autophagosomes for subsequent lysosomal destruction. The polypeptide is Interferon-inducible GTPase 1 (Iigp1) (Mus musculus (Mouse)).